Consider the following 834-residue polypeptide: Unextended protein (834 aa).

Positions 1–20 (MNTYFISFITIIIFANGING) are cleaved as a signal peptide. The Extracellular segment spans residues 21 to 182 (TSVDTSNKLL…DFLKIKTFEP (162 aa)). N-linked (GlcNAc...) asparagine glycans are attached at residues Asn-38, Asn-42, and Asn-156. The CNNM transmembrane domain occupies 182–361 (PLIPVWLAII…NDVNDLDKNE (180 aa)). The helical transmembrane segment at 183-203 (LIPVWLAIIIIVTCLGFSALF) threads the bilayer. Residues 204–244 (SGLNLGLMSMDRTELKILRNTGTEKEKKYASKIAPVRDQGN) are Cytoplasmic-facing. Residues 245 to 265 (YLLCSILLGNVLVNSTFTILL) traverse the membrane as a helical segment. The Extracellular segment spans residues 266-267 (DG). The helical transmembrane segment at 268–288 (LTSGLFAVIFSTLAIVLFGEI) threads the bilayer. Over 289–298 (TPQAVCSRHG) the chain is Cytoplasmic. The helical transmembrane segment at 299–319 (LAIGAKTILVTKTVMAITAPL) threads the bilayer. The Extracellular segment spans residues 320 to 834 (SYPVSRILDK…DKFESKQSKP (515 aa)). CBS domains are found at residues 380–441 (MTHI…NTPL) and 448–515 (YQNP…IVDE). N-linked (GlcNAc...) asparagine glycosylation is present at Asn-522. 604-656 (YIFTQGKAVDFFVLILEGRVEVTIGKEALMFESGPFTYFGTQALVPNVVIDSP) lines the a nucleoside 3',5'-cyclic phosphate pocket. The interval 739 to 765 (CFAQNQSTRRLSNRSINSSPTNMNRSP) is disordered. Polar residues predominate over residues 740 to 763 (FAQNQSTRRLSNRSINSSPTNMNR). Asn-743, Asn-751, and Asn-790 each carry an N-linked (GlcNAc...) asparagine glycan. Residues 807–834 (SGEQDTTAASMPLLPKLDDKFESKQSKP) form a disordered region. Residues 822–834 (KLDDKFESKQSKP) show a composition bias toward basic and acidic residues.

The protein belongs to the ACDP family. Interacts with PRL-1, possibly at the plasma membrane.

It is found in the cell membrane. In terms of biological role, probable metal transporter. Acts downstream of PRL-1 and protects the nervous system against olfactory carbon dioxide stimulation. The chain is Unextended protein from Drosophila melanogaster (Fruit fly).